The sequence spans 262 residues: Elongator complex protein 5 (262 aa).

Disordered stretches follow at residues 181 to 214 and 229 to 262; these read TPLD…FKIE and PYER…DLCI. A compositionally biased stretch (polar residues) spans 200–211; that stretch reads AEQTTEPASSTF. Positions 246–262 are enriched in acidic residues; that stretch reads DADDDFDEEDPDEDLCI.

It belongs to the ELP5 family. In terms of assembly, component of the elongator complex composed of Elp1, Elp2, Elp3, Elp4, Elp5 and Elp6. The elongator complex associates with and stabilizes microtubules; efficient interaction requires the full complex.

It localises to the cytoplasm. Its subcellular location is the nucleus. It is found in the cytoskeleton. The protein resides in the spindle. It functions in the pathway tRNA modification; 5-methoxycarbonylmethyl-2-thiouridine-tRNA biosynthesis. Its function is as follows. Component of the elongator complex, which is required for multiple tRNA modifications, including mcm5U (5-methoxycarbonylmethyl uridine), mcm5s2U (5-methoxycarbonylmethyl-2-thiouridine), and ncm5U (5-carbamoylmethyl uridine). The elongator complex catalyzes the formation of carboxymethyluridine in the wobble base at position 34 in tRNAs. Binding by the elongator complex stabilizes microtubules and promotes their growth. This induces central spindle asymmetry, promoting polarized signaling endosome trafficking during asymmetric cell division and cell fate assignation of sensory organ precursor cells. The protein is Elongator complex protein 5 of Drosophila melanogaster (Fruit fly).